A 150-amino-acid chain; its full sequence is Arginine repressor (150 aa).

The protein belongs to the ArgR family.

It localises to the cytoplasm. It participates in amino-acid biosynthesis; L-arginine biosynthesis [regulation]. Its function is as follows. Regulates arginine biosynthesis genes. The chain is Arginine repressor from Clostridium acetobutylicum (strain ATCC 824 / DSM 792 / JCM 1419 / IAM 19013 / LMG 5710 / NBRC 13948 / NRRL B-527 / VKM B-1787 / 2291 / W).